A 480-amino-acid polypeptide reads, in one-letter code: MEWEAVIGLEVHVQLATKSKIFSGAATTFGAEPNTQACAVDLAMPGMLPVMNEEAVRMAVMFGLAIGAEINTRSVFDRKNYFYPDLPKGYQISQLDHPTVKQGKLDIQLENGEKKTITVTRAHLEEDAGKSLHEDFHGMTGIDLNRAGTPLLEIVSEPELRSAKEAVAYLRKLHSIVTYLGISDGDMSQGSMRCDCNVSVRPKGQKEFGVRTEIKNVNSFRFVEKAIQGEIERQIDLIEEGGKVTQETRLYDADKDNTRSMRSKEFANDYRYFPDPDLLPIEIDDAYIEAVRSTLPELPEQKLARFCSEYGLSDYDAGVLASSRAQADYFEAATKIVGDAKLTANWIMGELAKRLNQNSLDISQSPVTAEGLGKLLLRLKDNTINGKAAKDVLEAMWNGEGEADEIIEKKGLIAVTDDSAIEAFVDEVLANNAAQVEQYKAADEAKRGKMIGFFVGQTMKISKGKANPQQVNEILAKKLS.

Belongs to the GatB/GatE family. GatB subfamily. As to quaternary structure, heterotrimer of A, B and C subunits.

The enzyme catalyses L-glutamyl-tRNA(Gln) + L-glutamine + ATP + H2O = L-glutaminyl-tRNA(Gln) + L-glutamate + ADP + phosphate + H(+). It catalyses the reaction L-aspartyl-tRNA(Asn) + L-glutamine + ATP + H2O = L-asparaginyl-tRNA(Asn) + L-glutamate + ADP + phosphate + 2 H(+). Functionally, allows the formation of correctly charged Asn-tRNA(Asn) or Gln-tRNA(Gln) through the transamidation of misacylated Asp-tRNA(Asn) or Glu-tRNA(Gln) in organisms which lack either or both of asparaginyl-tRNA or glutaminyl-tRNA synthetases. The reaction takes place in the presence of glutamine and ATP through an activated phospho-Asp-tRNA(Asn) or phospho-Glu-tRNA(Gln). The sequence is that of Aspartyl/glutamyl-tRNA(Asn/Gln) amidotransferase subunit B from Hahella chejuensis (strain KCTC 2396).